A 212-amino-acid polypeptide reads, in one-letter code: External core antigen (212 aa).

Residues 1 to 19 (MQLFHLCLIISCSCPTVQA) form the signal peptide. The tract at residues 25–27 (GWL) is HBEAG. The disordered stretch occupies residues 172 to 212 (LPETTVVRRRGRSPRRRTPSPRRRRSKSPRRRRSQSRESQC). Basic residues predominate over residues 178–205 (VRRRGRSPRRRTPSPRRRRSKSPRRRRS). One copy of the 1; half-length repeat lies at 184–189 (SPRRRT). Residues 184-205 (SPRRRTPSPRRRRSKSPRRRRS) are 3 X 7 AA repeats of S-P-R-R-R-R-S. Residues 184–212 (SPRRRTPSPRRRRSKSPRRRRSQSRESQC) constitute a propeptide that is removed on maturation. 2 repeat units span residues 191-197 (SPRRRRS) and 199-205 (SPRRRRS).

Belongs to the orthohepadnavirus precore antigen family. Homodimerizes. Phosphorylated. Post-translationally, cleaved by host furin.

The protein localises to the secreted. Its subcellular location is the host nucleus. Its function is as follows. May regulate immune response to the intracellular capsid in acting as a T-cell tolerogen, by having an immunoregulatory effect which prevents destruction of infected cells by cytotoxic T-cells. This immune regulation may predispose to chronicity during perinatal infections and prevent severe liver injury during adult infections. In Hepatitis B virus genotype C subtype adr (isolate Japan/Nishioka/1983) (HBV-C), this protein is External core antigen.